The following is a 384-amino-acid chain: UDP-4-amino-4-deoxy-L-arabinose--oxoglutarate aminotransferase (384 aa).

An N6-(pyridoxal phosphate)lysine modification is found at Lys-182.

Belongs to the DegT/DnrJ/EryC1 family. ArnB subfamily. As to quaternary structure, homodimer. It depends on pyridoxal 5'-phosphate as a cofactor.

It carries out the reaction UDP-4-amino-4-deoxy-beta-L-arabinose + 2-oxoglutarate = UDP-beta-L-threo-pentopyranos-4-ulose + L-glutamate. It participates in nucleotide-sugar biosynthesis; UDP-4-deoxy-4-formamido-beta-L-arabinose biosynthesis; UDP-4-deoxy-4-formamido-beta-L-arabinose from UDP-alpha-D-glucuronate: step 2/3. Its pathway is bacterial outer membrane biogenesis; lipopolysaccharide biosynthesis. Its function is as follows. Catalyzes the conversion of UDP-4-keto-arabinose (UDP-Ara4O) to UDP-4-amino-4-deoxy-L-arabinose (UDP-L-Ara4N). The modified arabinose is attached to lipid A and is required for resistance to polymyxin and cationic antimicrobial peptides. The polypeptide is UDP-4-amino-4-deoxy-L-arabinose--oxoglutarate aminotransferase (Yersinia pseudotuberculosis serotype O:1b (strain IP 31758)).